The chain runs to 641 residues: Bilirubin reductase (641 aa).

Q96 lines the FMN pocket. R167 (proton donor) is an active-site residue. FMN is bound by residues K214, R295, and 317 to 318 (GR). Positions 341, 344, 348, and 360 each coordinate [4Fe-4S] cluster. Positions 391, 410, 418, 428, and 455 each coordinate FAD.

This sequence in the N-terminal section; belongs to the NADH:flavin oxidoreductase/NADH oxidase family. Requires FAD as cofactor. FMN serves as cofactor. It depends on [4Fe-4S] cluster as a cofactor.

The catalysed reaction is urobilinogen + 4 A = (4Z,15Z)-bilirubin IXalpha + 4 AH2. It carries out the reaction urobilinogen + 2 A = (4Z,15Z)-mesobilirubin IXalpha + 2 AH2. It functions in the pathway porphyrin-containing compound metabolism; protoheme degradation. Functionally, bilirubin reductase that catalyzes reduction of mesobilirubin and/or bilirubin to urobilinogen, a key step during heme degradation. Urobilinogen then spontaneously degrades into urobilin, which gives urine its distinctive yellow color. The protein is Bilirubin reductase of Mediterraneibacter gnavus (strain CC55_001C).